The chain runs to 202 residues: Large ribosomal subunit protein bL9 (202 aa).

The segment at 177–202 (AGEFFDPEAEPDDVAEAGGEQTAEEK) is disordered. Residues 181 to 191 (FDPEAEPDDVA) show a composition bias toward acidic residues.

Belongs to the bacterial ribosomal protein bL9 family.

Binds to the 23S rRNA. The chain is Large ribosomal subunit protein bL9 from Nitrobacter hamburgensis (strain DSM 10229 / NCIMB 13809 / X14).